Consider the following 446-residue polypeptide: WD repeat domain phosphoinositide-interacting protein 1 (446 aa).

The short motif at Leu-131 to Leu-136 is the Nuclear receptor interaction element. The WD 1 repeat unit spans residues Ala-184–Glu-224. Residues Phe-225–Gly-228 carry the L/FRRG motif motif. WD repeat units follow at residues Lys-230–Pro-269 and Ser-312–Cys-351. The interval Ala-386–Leu-406 is disordered.

This sequence belongs to the WD repeat PROPPIN family. Interacts with androgen receptor (AR) and the estrogen receptors ESR1 and ESR2. Interacts with WIPI2. Interacts with WDR45. Interacts with ATG16L1. May interact with NUDC.

The protein resides in the golgi apparatus. It is found in the trans-Golgi network. The protein localises to the endosome. Its subcellular location is the cytoplasmic vesicle. It localises to the clathrin-coated vesicle. The protein resides in the preautophagosomal structure membrane. It is found in the cytoplasm. The protein localises to the cytoskeleton. Functionally, component of the autophagy machinery that controls the major intracellular degradation process by which cytoplasmic materials are packaged into autophagosomes and delivered to lysosomes for degradation. Plays an important role in starvation- and calcium-mediated autophagy, as well as in mitophagy. Functions downstream of the ULK1 and PI3-kinases that produce phosphatidylinositol 3-phosphate (PtdIns3P) on membranes of the endoplasmic reticulum once activated. Binds phosphatidylinositol 3-phosphate (PtdIns3P), and maybe other phosphoinositides including PtdIns3,5P2 and PtdIns5P, and is recruited to phagophore assembly sites at the endoplasmic reticulum membranes. There, it assists WIPI2 in the recruitment of ATG12-ATG5-ATG16L1, a complex that directly controls the elongation of the nascent autophagosomal membrane. Together with WDR45/WIPI4, promotes ATG2 (ATG2A or ATG2B)-mediated lipid transfer by enhancing ATG2-association with phosphatidylinositol 3-monophosphate (PI3P)-containing membranes. Involved in xenophagy of Staphylococcus aureus. Invading S.aureus cells become entrapped in autophagosome-like WIPI1 positive vesicles targeted for lysosomal degradation. Also plays a distinct role in controlling the transcription of melanogenic enzymes and melanosome maturation, a process that is distinct from starvation-induced autophagy. May also regulate the trafficking of proteins involved in the mannose-6-phosphate receptor (MPR) recycling pathway. The chain is WD repeat domain phosphoinositide-interacting protein 1 (Wipi1) from Mus musculus (Mouse).